Reading from the N-terminus, the 242-residue chain is DNA repair protein RecO (242 aa).

The protein belongs to the RecO family. Monomer.

Its function is as follows. Involved in DNA repair and RecF pathway recombination. This is DNA repair protein RecO from Shigella boydii serotype 18 (strain CDC 3083-94 / BS512).